A 473-amino-acid polypeptide reads, in one-letter code: Ras-GEF domain-containing family member 1B (473 aa).

The N-terminal Ras-GEF domain occupies 34–164 (HDNNLLSGSL…QMMQCLIRKL (131 aa)). Positions 204–452 (NDPYTLAQQL…LYLASYESEG (249 aa)) constitute a Ras-GEF domain.

As to quaternary structure, interacts with Ras family proteins. Interacts with CCDC124 during cytokinesis.

It is found in the early endosome. It localises to the late endosome. Its subcellular location is the midbody. In terms of biological role, guanine nucleotide exchange factor (GEF) with specificity for RAP2A, it doesn't seems to activate other Ras family proteins (in vitro). The chain is Ras-GEF domain-containing family member 1B (RASGEF1B) from Homo sapiens (Human).